The following is a 121-amino-acid chain: Small ribosomal subunit protein uS13 (121 aa).

The disordered stretch occupies residues 89–121; it reads RRHRMSLPVRGQRTRTNARTRRGSRKTVAGRKK. Over residues 100-121 the composition is skewed to basic residues; the sequence is QRTRTNARTRRGSRKTVAGRKK.

Belongs to the universal ribosomal protein uS13 family. As to quaternary structure, part of the 30S ribosomal subunit. Forms a loose heterodimer with protein S19. Forms two bridges to the 50S subunit in the 70S ribosome.

Located at the top of the head of the 30S subunit, it contacts several helices of the 16S rRNA. In the 70S ribosome it contacts the 23S rRNA (bridge B1a) and protein L5 of the 50S subunit (bridge B1b), connecting the 2 subunits; these bridges are implicated in subunit movement. Contacts the tRNAs in the A and P-sites. In Prochlorococcus marinus subsp. pastoris (strain CCMP1986 / NIES-2087 / MED4), this protein is Small ribosomal subunit protein uS13.